Consider the following 382-residue polypeptide: Transforming growth factor beta-1 proprotein (382 aa).

Positions 1 to 21 (MEVLWMLLVLLVLHLSSLAMS) are cleaved as a signal peptide. The segment at 22-65 (LSTCKAVDMEEVRKRRIEAIRGQILSKLKLDKTPDVDSEKMTVP) is straightjacket domain. Positions 66–263 (SEAIFLYNST…SMPAERIDTV (198 aa)) are arm domain. Residues Asn-73, Asn-123, and Asn-166 are each glycosylated (N-linked (GlcNAc...) asparagine). Positions 218-242 (PTPQAKDIDIEGFPALRGDLASLSS) are bowtie tail. The Cell attachment site signature appears at 234 to 236 (RGD). Cystine bridges form between Cys-277–Cys-286, Cys-285–Cys-348, Cys-314–Cys-379, and Cys-318–Cys-381.

It belongs to the TGF-beta family. In terms of assembly, latency-associated peptide: Homodimer; disulfide-linked. Latency-associated peptide: Interacts with Transforming growth factor beta-1 (TGF-beta-1) chain; interaction is non-covalent and maintains (TGF-beta-1) in a latent state; each Latency-associated peptide (LAP) monomer interacts with TGF-beta-1 in the other monomer. Transforming growth factor beta-1: Homodimer; disulfide-linked. Transforming growth factor beta-1: Interacts with TGF-beta receptors (tgfbr1 and tgfbr2), leading to signal transduction. Post-translationally, transforming growth factor beta-1 proprotein: The precursor proprotein is cleaved in the Golgi apparatus to form Transforming growth factor beta-1 (TGF-beta-1) and Latency-associated peptide (LAP) chains, which remain non-covalently linked, rendering TGF-beta-1 inactive.

The protein resides in the secreted. It localises to the extracellular space. The protein localises to the extracellular matrix. In terms of biological role, transforming growth factor beta-1 proprotein: Precursor of the Latency-associated peptide (LAP) and Transforming growth factor beta-1 (TGF-beta-1) chains, which constitute the regulatory and active subunit of TGF-beta-1, respectively. Its function is as follows. Required to maintain the Transforming growth factor beta-1 (TGF-beta-1) chain in a latent state during storage in extracellular matrix. Associates non-covalently with TGF-beta-1 and regulates its activation via interaction with 'milieu molecules', such as LTBP1, LRRC32/GARP and LRRC33/NRROS, that control activation of TGF-beta-1. Interaction with integrins (ITGAV:ITGB6 or ITGAV:ITGB8) results in distortion of the Latency-associated peptide chain and subsequent release of the active TGF-beta-1. Transforming growth factor beta-1: Multifunctional protein that regulates the growth and differentiation of various cell types and is involved in various processes, such as normal development, immune function, microglia function and responses to neurodegeneration. Activation into mature form follows different steps: following cleavage of the proprotein in the Golgi apparatus, Latency-associated peptide (LAP) and Transforming growth factor beta-1 (TGF-beta-1) chains remain non-covalently linked rendering TGF-beta-1 inactive during storage in extracellular matrix. At the same time, LAP chain interacts with 'milieu molecules', such as ltbp1, lrrc32/garp and lrrc33/nrros that control activation of TGF-beta-1 and maintain it in a latent state during storage in extracellular milieus. TGF-beta-1 is released from LAP by integrins (ITGAV:ITGB6 or ITGAV:ITGB8): integrin-binding to LAP stabilizes an alternative conformation of the LAP bowtie tail and results in distortion of the LAP chain and subsequent release of the active TGF-beta-1. Once activated following release of LAP, TGF-beta-1 acts by binding to TGF-beta receptors (tgfbr1 and tgfbr2), which transduce signal. While expressed by many cells types, TGF-beta-1 only has a very localized range of action within cell environment thanks to fine regulation of its activation by Latency-associated peptide chain (LAP) and 'milieu molecules'. Plays an important role in bone remodeling: acts as a potent stimulator of osteoblastic bone formation. Can promote either T-helper 17 cells (Th17) or regulatory T-cells (Treg) lineage differentiation in a concentration-dependent manner. Can induce epithelial-to-mesenchymal transition (EMT) and cell migration in various cell types. This is Transforming growth factor beta-1 proprotein (tgfb1) from Xenopus laevis (African clawed frog).